Reading from the N-terminus, the 2380-residue chain is DNA polymerase epsilon catalytic subunit A (2380 aa).

Positions Tyr-169–Lys-196 are enriched in low complexity. 5 disordered regions span residues Tyr-169–Lys-209, Phe-1178–Asp-1210, Lys-1766–Thr-1787, Gln-1967–Lys-1998, and Lys-2059–Ser-2120. Acidic residues predominate over residues Glu-1183–Asn-1201. The segment covering Asn-1767 to Asn-1776 has biased composition (low complexity). Positions Gly-1777 to Thr-1787 are enriched in polar residues. The span at Asn-1975–Gln-1991 shows a compositional bias: acidic residues. 2 stretches are compositionally biased toward low complexity: residues Lys-2059 to Asp-2081 and Ser-2110 to Ser-2120. Residues Cys-2225 and Cys-2228 each coordinate Zn(2+). A CysA-type zinc finger spans residues Cys-2225 to Cys-2288. Residues Ile-2245–Asn-2258 are compositionally biased toward low complexity. Positions Ile-2245–Asp-2275 are disordered. Over residues Asp-2259 to Asp-2275 the composition is skewed to acidic residues. Zn(2+) is bound by residues Cys-2285 and Cys-2288. [4Fe-4S] cluster is bound by residues Cys-2319, Cys-2322, Cys-2334, and Cys-2337. Residues Cys-2319–Cys-2337 carry the CysB motif motif.

This sequence belongs to the DNA polymerase type-B family. Consists of three subunits: pole, pole2 and pole3. [4Fe-4S] cluster serves as cofactor.

The protein localises to the nucleus. It catalyses the reaction DNA(n) + a 2'-deoxyribonucleoside 5'-triphosphate = DNA(n+1) + diphosphate. Its function is as follows. DNA polymerase II participates in chromosomal DNA replication. This chain is DNA polymerase epsilon catalytic subunit A (pole), found in Dictyostelium discoideum (Social amoeba).